The chain runs to 297 residues: Glycerol-3-phosphate dehydrogenase [NAD(P)+] (297 aa).

Positions 11, 33, and 79 each coordinate NADPH. Positions 79, 107, and 109 each coordinate sn-glycerol 3-phosphate. NADPH is bound at residue alanine 111. Sn-glycerol 3-phosphate-binding residues include lysine 161, aspartate 214, serine 224, arginine 225, and asparagine 226. Lysine 161 functions as the Proton acceptor in the catalytic mechanism. Arginine 225 is a binding site for NADPH. NADPH is bound by residues valine 249 and glutamate 251.

This sequence belongs to the NAD-dependent glycerol-3-phosphate dehydrogenase family.

It localises to the cytoplasm. The enzyme catalyses sn-glycerol 3-phosphate + NAD(+) = dihydroxyacetone phosphate + NADH + H(+). It carries out the reaction sn-glycerol 3-phosphate + NADP(+) = dihydroxyacetone phosphate + NADPH + H(+). It functions in the pathway membrane lipid metabolism; glycerophospholipid metabolism. Catalyzes the reduction of the glycolytic intermediate dihydroxyacetone phosphate (DHAP) to sn-glycerol 3-phosphate (G3P), the key precursor for phospholipid synthesis. This is Glycerol-3-phosphate dehydrogenase [NAD(P)+] from Campylobacter jejuni subsp. jejuni serotype O:6 (strain 81116 / NCTC 11828).